The chain runs to 449 residues: Putative recombination initiation defects 3 (449 aa).

The interval 21–56 (LRRSAEPQASQQLRSQQSQQSFSQGPSSSQRGCGGF) is disordered. Positions 28–50 (QASQQLRSQQSQQSFSQGPSSSQ) are enriched in low complexity. The Nuclear localization signal motif lies at 437 to 441 (RTKRK).

As to quaternary structure, interacts with PRD1; this interaction facilitates a binding to DFO.

The protein resides in the nucleus. Its function is as follows. Involved in DNA cleavage that forms the double-strand breaks (DSB) that initiate meiotic recombination. This Arabidopsis thaliana (Mouse-ear cress) protein is Putative recombination initiation defects 3.